Reading from the N-terminus, the 170-residue chain is RNA pyrophosphohydrolase (170 aa).

A Nudix hydrolase domain is found at 8-151; the sequence is PYRPNVGIAL…KKALYAELIP (144 aa). Residues 42–63 carry the Nudix box motif; sequence GGIDEGETPQVAALREMGEEIG.

The protein belongs to the Nudix hydrolase family. RppH subfamily. A divalent metal cation is required as a cofactor.

Accelerates the degradation of transcripts by removing pyrophosphate from the 5'-end of triphosphorylated RNA, leading to a more labile monophosphorylated state that can stimulate subsequent ribonuclease cleavage. The sequence is that of RNA pyrophosphohydrolase from Gluconobacter oxydans (strain 621H) (Gluconobacter suboxydans).